A 719-amino-acid polypeptide reads, in one-letter code: Phosphoribosylformylglycinamidine synthase subunit PurL (719 aa).

The active site involves His-47. 2 residues coordinate ATP: Tyr-50 and Lys-89. Glu-91 serves as a coordination point for Mg(2+). Residues 92–95 (SHNH) and Arg-114 each bind substrate. The Proton acceptor role is filled by His-93. Residue Asp-115 participates in Mg(2+) binding. Gln-238 lines the substrate pocket. Mg(2+) is bound at residue Asp-266. 310–312 (ESQ) provides a ligand contact to substrate. ATP contacts are provided by Asp-488 and Gly-525. Residue Asn-526 coordinates Mg(2+). Ser-528 is a binding site for substrate.

It belongs to the FGAMS family. Monomer. Part of the FGAM synthase complex composed of 1 PurL, 1 PurQ and 2 PurS subunits.

The protein localises to the cytoplasm. It catalyses the reaction N(2)-formyl-N(1)-(5-phospho-beta-D-ribosyl)glycinamide + L-glutamine + ATP + H2O = 2-formamido-N(1)-(5-O-phospho-beta-D-ribosyl)acetamidine + L-glutamate + ADP + phosphate + H(+). It participates in purine metabolism; IMP biosynthesis via de novo pathway; 5-amino-1-(5-phospho-D-ribosyl)imidazole from N(2)-formyl-N(1)-(5-phospho-D-ribosyl)glycinamide: step 1/2. Part of the phosphoribosylformylglycinamidine synthase complex involved in the purines biosynthetic pathway. Catalyzes the ATP-dependent conversion of formylglycinamide ribonucleotide (FGAR) and glutamine to yield formylglycinamidine ribonucleotide (FGAM) and glutamate. The FGAM synthase complex is composed of three subunits. PurQ produces an ammonia molecule by converting glutamine to glutamate. PurL transfers the ammonia molecule to FGAR to form FGAM in an ATP-dependent manner. PurS interacts with PurQ and PurL and is thought to assist in the transfer of the ammonia molecule from PurQ to PurL. This Jannaschia sp. (strain CCS1) protein is Phosphoribosylformylglycinamidine synthase subunit PurL.